Here is a 276-residue protein sequence, read N- to C-terminus: Pirin-like protein CC_0481 (276 aa).

It belongs to the pirin family.

The protein is Pirin-like protein CC_0481 of Caulobacter vibrioides (strain ATCC 19089 / CIP 103742 / CB 15) (Caulobacter crescentus).